The primary structure comprises 367 residues: Glutamate 5-kinase (367 aa).

Position 9 (K9) interacts with ATP. Positions 49, 136, and 148 each coordinate substrate. ATP-binding positions include 168 to 169 (TD) and 210 to 216 (TGGMKSK). The PUA domain maps to 276-350 (SGQIEIDAGA…GMQSQQIQAR (75 aa)).

Belongs to the glutamate 5-kinase family.

The protein resides in the cytoplasm. The enzyme catalyses L-glutamate + ATP = L-glutamyl 5-phosphate + ADP. The protein operates within amino-acid biosynthesis; L-proline biosynthesis; L-glutamate 5-semialdehyde from L-glutamate: step 1/2. Functionally, catalyzes the transfer of a phosphate group to glutamate to form L-glutamate 5-phosphate. The chain is Glutamate 5-kinase from Bacillus anthracis.